Reading from the N-terminus, the 288-residue chain is Oxaloacetate decarboxylase (288 aa).

S47 provides a ligand contact to substrate. D85 provides a ligand contact to Mg(2+). Substrate is bound by residues R156 and H232.

Belongs to the isocitrate lyase/PEP mutase superfamily. Oxaloacetate decarboxylase family. In terms of assembly, homotetramer; dimer of dimers. Mg(2+) is required as a cofactor.

It carries out the reaction oxaloacetate + H(+) = pyruvate + CO2. Catalyzes the decarboxylation of oxaloacetate into pyruvate. Seems to play a role in maintaining cellular concentrations of bicarbonate and pyruvate. This is Oxaloacetate decarboxylase from Rhodopseudomonas palustris (strain TIE-1).